Reading from the N-terminus, the 1251-residue chain is Probable transcription factor TDA9 (1251 aa).

2 C2H2-type zinc fingers span residues F61 to H83 and F89 to H112. Disordered regions lie at residues V160–R227 and N398–S428. A compositionally biased stretch (basic residues) spans K164–K173. Residues Y183 to P202 show a composition bias toward polar residues. Residues N407–S428 are compositionally biased toward low complexity. A phosphoserine mark is found at S527 and S603. Low complexity predominate over residues S617–G634. Residues S617 to T636 are disordered.

The protein belongs to the RSF2/TDA9 family.

It is found in the nucleus. Functionally, DNA-binding protein that acts probably as a transcription factor. This Saccharomyces cerevisiae (strain ATCC 204508 / S288c) (Baker's yeast) protein is Probable transcription factor TDA9 (TDA9).